Here is a 42-residue protein sequence, read N- to C-terminus: Photosystem I reaction center subunit IX (42 aa).

Residues Y7–I27 form a helical membrane-spanning segment.

The protein belongs to the PsaJ family.

It localises to the plastid. Its subcellular location is the chloroplast thylakoid membrane. Functionally, may help in the organization of the PsaE and PsaF subunits. The chain is Photosystem I reaction center subunit IX from Lepidium virginicum (Virginia pepperweed).